Consider the following 262-residue polypeptide: GTP cyclohydrolase 1 type 2 homolog (262 aa).

A divalent metal cation is bound by residues His64, His65, Asp103, His224, and Glu228.

Belongs to the GTP cyclohydrolase I type 2/NIF3 family. In terms of assembly, homohexamer.

This chain is GTP cyclohydrolase 1 type 2 homolog, found in Clostridium perfringens (strain 13 / Type A).